A 430-amino-acid polypeptide reads, in one-letter code: Tol-Pal system protein TolB (430 aa).

The signal sequence occupies residues 1-21 (MRRFVTLLIALLCLSATAVQA).

Belongs to the TolB family. In terms of assembly, the Tol-Pal system is composed of five core proteins: the inner membrane proteins TolA, TolQ and TolR, the periplasmic protein TolB and the outer membrane protein Pal. They form a network linking the inner and outer membranes and the peptidoglycan layer.

It localises to the periplasm. Part of the Tol-Pal system, which plays a role in outer membrane invagination during cell division and is important for maintaining outer membrane integrity. This is Tol-Pal system protein TolB from Syntrophotalea carbinolica (strain DSM 2380 / NBRC 103641 / GraBd1) (Pelobacter carbinolicus).